The chain runs to 355 residues: Na(+)/H(+) exchange regulatory cofactor NHE-RF1 (355 aa).

An N-acetylserine modification is found at Ser-2. Ser-2 and Ser-46 each carry phosphoserine. One can recognise a PDZ 1 domain in the interval 14 to 94 (LCCLEKGPNG…AVRLLVVDPE (81 aa)). 2 stretches are compositionally biased toward basic and acidic residues: residues 110-119 (LLRPQEKSEQ) and 127-146 (DTHEAGDQNEAEKSHLRELR). Positions 110–146 (LLRPQEKSEQAEPPAAADTHEAGDQNEAEKSHLRELR) are disordered. Residues 149 to 229 (LCTMKKGPNG…EAKLLVVDKE (81 aa)) enclose the PDZ 2 domain. The interval 244 to 355 (EHLDGPLPEP…SKKNELFSNL (112 aa)) is disordered. A compositionally biased stretch (basic and acidic residues) spans 259-268 (IQKESSREAL). Residues Ser-264, Ser-275, Ser-285, and Ser-286 each carry the phosphoserine modification. Positions 270–286 (EPASESPRPALARSASS) are enriched in low complexity. Phosphothreonine is present on Thr-288. Residues Ser-289, Ser-294, and Ser-297 each carry the phosphoserine modification. Residues 303–323 (STEPSSTSSSSSDPILDLNIS) are compositionally biased toward low complexity. Residues 345–355 (WSKKNELFSNL) are compositionally biased toward basic and acidic residues.

In terms of assembly, homodimer, and heterodimer with NHERF2. Binds the N-termini of EZR, RDX and MSN. Binds the C-termini of PDGFRA, PDGFRB, ADRB2 and NOS2. Binds ARHGAP17, EPI64, RACK1, OPRK1, GNAQ, CTNNB1, PLCB3 and CLCN3. Forms a complex with CFTR and SLC4A7. Forms a complex with SLC4A7 and ATP6V1B1. Binds PDZK1. Binds the C-terminus of PAG1. In resting T-cells, part of a PAG1-NHERF1-MSN complex which is disrupted upon TCR activation. Directly interacts with HTR4. Interacts with MCC. Interacts with TRPC4 (via the PDZ-binding domain). Interacts (via the PDZ 1 domain) with PODXL (via the C-terminal PDZ-binding motif DTHL); interaction is not detected in glomerular epithelium cells. Interacts (via the PDZ 1 domain) with PODXL (via the C-terminal PDZ-binding motif DTHL); the interaction take place early in the secretory pathway and is necessary for its apical membrane sorting. Interacts with SLC34A1. Interacts with CFTR, SLC26A3 and SLC26A6. Interacts (via PDZ domains) with ACE2 (via PDZ-binding motif); the interaction may enhance ACE2 membrane residence. Expressed in spermatogenic cells.

The protein localises to the cytoplasm. Its subcellular location is the apical cell membrane. It is found in the cell projection. The protein resides in the filopodium. It localises to the ruffle. The protein localises to the microvillus. Its subcellular location is the endomembrane system. Scaffold protein that connects plasma membrane proteins with members of the ezrin/moesin/radixin family and thereby helps to link them to the actin cytoskeleton and to regulate their surface expression. Necessary for recycling of internalized ADRB2. Was first known to play a role in the regulation of the activity and subcellular location of SLC9A3. Necessary for cAMP-mediated phosphorylation and inhibition of SLC9A3. May enhance Wnt signaling. May participate in HTR4 targeting to microvilli. Involved in the regulation of phosphate reabsorption in the renal proximal tubules. Involved in sperm capacitation. May participate in the regulation of the chloride and bicarbonate homeostasis in spermatozoa. In Mus musculus (Mouse), this protein is Na(+)/H(+) exchange regulatory cofactor NHE-RF1 (Nherf1).